Here is a 210-residue protein sequence, read N- to C-terminus: LexA repressor (210 aa).

The H-T-H motif DNA-binding region spans 29–49; the sequence is VREIGEAVDLSSTSTVHGHIS. Catalysis depends on for autocatalytic cleavage activity residues Ser-130 and Lys-168.

It belongs to the peptidase S24 family. In terms of assembly, homodimer.

The enzyme catalyses Hydrolysis of Ala-|-Gly bond in repressor LexA.. Its function is as follows. Represses a number of genes involved in the response to DNA damage (SOS response), including recA and lexA. In the presence of single-stranded DNA, RecA interacts with LexA causing an autocatalytic cleavage which disrupts the DNA-binding part of LexA, leading to derepression of the SOS regulon and eventually DNA repair. The chain is LexA repressor from Lactiplantibacillus plantarum (strain ATCC BAA-793 / NCIMB 8826 / WCFS1) (Lactobacillus plantarum).